A 1368-amino-acid chain; its full sequence is Kinesin-like protein KIF24 (1368 aa).

The region spanning 1-64 is the SAM domain; the sequence is MASWLYECLC…FQLIKIIKIM (64 aa). The disordered stretch occupies residues 89-112; sequence ELRSGPRRQLNFDSPADNKDRNAS. Phosphoserine occurs at positions 102 and 112. One can recognise a Kinesin motor domain in the interval 223–546; that stretch reads KIRVCVRKRP…LRYADRVKEL (324 aa). 313-320 serves as a coordination point for ATP; that stretch reads GQTGAGKT. At serine 478 the chain carries Phosphoserine. The interaction with MPHOSPH9 stretch occupies residues 478–709; the sequence is SLLALKECIR…STKCKKVQTV (232 aa). The span at 557-576 shows a compositional bias: polar residues; that stretch reads TSRNRTSGNSSPKRIQSSPG. 2 disordered regions span residues 557 to 584 and 602 to 639; these read TSRN…DKCS and GSTR…SPSQ. A Phosphoserine modification is found at serine 584. Threonine 621 carries the post-translational modification Phosphothreonine; by NEK2. At serine 622 the chain carries Phosphoserine; by NEK2. The residue at position 646 (serine 646) is a Phosphoserine. Disordered regions lie at residues 651–670, 729–753, 792–849, 864–938, and 952–984; these read TVRS…PLCS, HRAE…WTNI, QYRP…NTLE, GPEK…LAEK, and RGGG…EEDG. A compositionally biased stretch (acidic residues) spans 819-830; sequence QVEELDDSDFSE. Serine 826 and serine 829 each carry phosphoserine. Composition is skewed to polar residues over residues 839-849 and 871-881; these read QRATKQRNTLE and ERQQSLFSSPR. Positions 882 to 906 are enriched in basic and acidic residues; the sequence is TGDKKDLTKSWVDSRDPINHRRAAL. Phosphoserine is present on serine 1012. Disordered regions lie at residues 1054–1073 and 1086–1148; these read MSLL…QLVQ and GGPV…SREA. Positions 1106–1119 are enriched in polar residues; it reads SSATRHLWLSSSPP. Over residues 1138 to 1148 the composition is skewed to basic and acidic residues; that stretch reads HPADKLPSREA.

This sequence belongs to the TRAFAC class myosin-kinesin ATPase superfamily. Kinesin family. As to quaternary structure, interacts with CCP110, CEP97, TALPID3. Interacts with MPHOSPH9.

It is found in the cytoplasm. Its subcellular location is the cytoskeleton. The protein localises to the microtubule organizing center. The protein resides in the centrosome. It localises to the centriole. Functionally, microtubule-dependent motor protein that acts as a negative regulator of ciliogenesis by mediating recruitment of CCP110 to mother centriole in cycling cells, leading to restrict nucleation of cilia at centrioles. Mediates depolymerization of microtubules of centriolar origin, possibly to suppress aberrant cilia formation. Following activation by NEK2 involved in disassembly of primary cilium during G2/M phase but does not disassemble fully formed ciliary axonemes. As cilium assembly and disassembly is proposed to coexist in a dynamic equilibrium may suppress nascent cilium assembly and, potentially, ciliar re-assembly in cells that have already disassembled their cilia ensuring the completion of cilium removal in the later stages of the cell cycle. Plays an important role in recruiting MPHOSPH9, a negative regulator of cilia formation to the distal end of mother centriole. The polypeptide is Kinesin-like protein KIF24 (KIF24) (Homo sapiens (Human)).